A 157-amino-acid polypeptide reads, in one-letter code: uncharacterized protein (157 aa).

The 138-residue stretch at 9 to 146 (LLINYKTLDE…GDFYVWHPET (138 aa)) folds into the N-acetyltransferase domain.

This is an uncharacterized protein from Bacillus cereus (strain AH187).